We begin with the raw amino-acid sequence, 180 residues long: Adenine phosphoribosyltransferase (180 aa).

An N-acetylserine modification is found at Ser-2. Phosphoserine is present on residues Ser-4, Ser-15, and Ser-30. The residue at position 60 (Tyr-60) is a Phosphotyrosine. Ser-66 carries the phosphoserine modification. Lys-114 is modified (N6-acetyllysine). Phosphothreonine is present on Thr-135.

Belongs to the purine/pyrimidine phosphoribosyltransferase family. As to quaternary structure, homodimer.

It localises to the cytoplasm. It catalyses the reaction AMP + diphosphate = 5-phospho-alpha-D-ribose 1-diphosphate + adenine. It functions in the pathway purine metabolism; AMP biosynthesis via salvage pathway; AMP from adenine: step 1/1. Functionally, catalyzes a salvage reaction resulting in the formation of AMP, that is energically less costly than de novo synthesis. The protein is Adenine phosphoribosyltransferase of Rattus norvegicus (Rat).